A 635-amino-acid chain; its full sequence is Interferon-induced GTP-binding protein Mx2 (635 aa).

A Dynamin-type G domain is found at 31–304 (DLALPAIAVI…LVQHIEKSMP (274 aa)). A G1 motif region spans residues 41–48 (GDQSSGKS). 41 to 48 (GDQSSGKS) lines the GTP pocket. The tract at residues 66 to 68 (VTR) is G2 motif. Positions 142 to 145 (DLPG) are G3 motif. Residues 142-146 (DLPGI) and 211-214 (TKPD) each bind GTP. The G4 motif stretch occupies residues 211–214 (TKPD). The tract at residues 243–246 (KCRG) is G5 motif. A GED domain is found at 549-635 (LREMMLHLKS…MKAHNYLVEF (87 aa)).

It belongs to the TRAFAC class dynamin-like GTPase superfamily. Dynamin/Fzo/YdjA family.

It localises to the nucleus. It is found in the cytoplasm. Does not inhibit strain RB-1 of the fish pathogen, infectious hematopoietic necrosis virus (IHNV). This chain is Interferon-induced GTP-binding protein Mx2, found in Oncorhynchus mykiss (Rainbow trout).